A 551-amino-acid chain; its full sequence is Arginine--tRNA ligase (551 aa).

Positions 125–135 (ANPTGPLHIGH) match the 'HIGH' region motif.

This sequence belongs to the class-I aminoacyl-tRNA synthetase family. In terms of assembly, monomer.

Its subcellular location is the cytoplasm. The catalysed reaction is tRNA(Arg) + L-arginine + ATP = L-arginyl-tRNA(Arg) + AMP + diphosphate. The chain is Arginine--tRNA ligase from Nitratidesulfovibrio vulgaris (strain DSM 19637 / Miyazaki F) (Desulfovibrio vulgaris).